The chain runs to 605 residues: Adaptin medium chain homolog APM2 (605 aa).

Positions Glu150–Lys196 are disordered. Over residues Gly155–Ser171 the composition is skewed to low complexity. Positions Asn174–Lys196 are enriched in basic residues. One can recognise an MHD domain in the interval Lys269–Ile604.

It belongs to the adaptor complexes medium subunit family. In terms of assembly, component of the AP-1R complex composed of at least APM2, APL4 and APS1. Interacts with MIL1. Interacts with APL2.

It is found in the golgi apparatus membrane. It localises to the early endosome membrane. The protein localises to the cytoplasmic vesicle. The protein resides in the clathrin-coated vesicle membrane. In terms of biological role, component of the AP-1-related (AP-1R) complex, an adapter protein complex that mediates of cargo protein sorting in clathrin-coated vesicles. AP-1R has a specific role in SNARE SNC1 sorting. In contrast to the APM1-containing AP-1 complex, AP-1R is incapable of sorting CHS3. This is Adaptin medium chain homolog APM2 (APM2) from Saccharomyces cerevisiae (strain ATCC 204508 / S288c) (Baker's yeast).